Consider the following 185-residue polypeptide: MHRLTSDVDFFARSAVQVAADLIGADFTVSGVGGTIVETEAYLPDDAASHSFAGTTARNRAMFGPPAHAYIYLSYGLHWCLNFVCLPGSAVLIRAIEPRWGIDTMRARRGVREERLLCSGPGRVGQALAISRELDGLPLGEDPFRLTLPSTKPPLAAGIRVGITKAVEQPWRFGLAGSSFVSRKF.

It belongs to the DNA glycosylase MPG family.

This is Putative 3-methyladenine DNA glycosylase from Rhizobium meliloti (strain 1021) (Ensifer meliloti).